A 292-amino-acid chain; its full sequence is Putative peptidyl-prolyl cis-trans isomerase NifM (292 aa).

The 96-residue stretch at 148 to 243 (HILVTINEDF…IGFHVLYCES (96 aa)) folds into the PpiC domain.

The protein belongs to the PpiC/parvulin rotamase family.

It carries out the reaction [protein]-peptidylproline (omega=180) = [protein]-peptidylproline (omega=0). Required for the activation and stabilization of the iron-component (NifH) of nitrogenase. Probable PPIase. The chain is Putative peptidyl-prolyl cis-trans isomerase NifM (nifM) from Azotobacter vinelandii.